Consider the following 159-residue polypeptide: Transcription repressor OFP6 (159 aa).

The tract at residues 39–60 (PKRPSSTYRHCHSSISSATPSS) is disordered. The span at 51–60 (SSISSATPSS) shows a compositional bias: low complexity. The region spanning 70-129 (VEKDSDDPYLDFRQSMLQMILENQIYSKDELRELLQCFLSLNSHYHHGIIVRAFSEIWED) is the OVATE domain.

As to quaternary structure, interacts with KNAT1 and KNAT7. Expressed in roots, shoots, rosette and cauline leaves, stems, flower buds and siliques.

It is found in the nucleus. Transcriptional repressor that regulates multiple aspects of plant growth and development through the regulation of BEL1-LIKE (BLH) and KNOX TALE (KNAT) homeodomain transcription factors. The protein is Transcription repressor OFP6 (OFP6) of Arabidopsis thaliana (Mouse-ear cress).